Here is a 132-residue protein sequence, read N- to C-terminus: Phosphomevalonate dehydratase small subunit (132 aa).

The active-site Proton acceptor is Ser-61.

This sequence belongs to the AcnX type II small subunit family. Heterodimer composed of a large subunit (PMDh-L) and a small subunit (PMDh-S).

It catalyses the reaction (R)-5-phosphomevalonate = (2E)-3-methyl-5-phosphooxypent-2-enoate + H2O. It functions in the pathway isoprenoid biosynthesis; isopentenyl diphosphate biosynthesis via mevalonate pathway. Its function is as follows. Component of a hydro-lyase that catalyzes the dehydration of mevalonate 5-phosphate (MVA5P) to form trans-anhydromevalonate 5-phosphate (tAHMP). Involved in the archaeal mevalonate (MVA) pathway, which provides fundamental precursors for isoprenoid biosynthesis, such as isopentenyl diphosphate (IPP) and dimethylallyl diphosphate (DMAPP). The sequence is that of Phosphomevalonate dehydratase small subunit from Archaeoglobus fulgidus (strain ATCC 49558 / DSM 4304 / JCM 9628 / NBRC 100126 / VC-16).